A 599-amino-acid chain; its full sequence is MKTQNYDESKIITLSSLEHIRLRSGMYIGRLGDGSNIDDGIYVLIKEIIDNSIDEFIMGYGNEIFIKKENNLISIRDYGRGIPLGKVIESVSVINTGAKYNDDVFQFSVGLNGVGTKAVNALSSKFLVRSTRNGKSFEALFSKGKLLESREIKSSDKDGTYVEFLADSEIFGKYSYSEDFLKRRFFHYACLNKGLIINYNDQIFESKNGLLDFLNSEIKSDDLLYDIVYYSSKTLEFAFSHTNNYGETYFSFVNGQYTNDGGTHQTGFREGFVRAINDFLKKTYSSTDIREGLVATLSVKIKDPIFESQTKNKLGNIETRGNVAKEVQKIISEILYKDKILAKLIEKKVVDNERLRKELSSVRKEARERAKKISFKIPKLKDCKFHFNDSSKQSEQTMIFLTEGDSATGSMVSCRDVYTQAIFSLRGKPQNMFEKNKSEIYKNEELYNMMVALGIEESIENLRYNKVVIATDADFDGFHIRNLLLTFFLTFFEDLILNGHMYILETPLFRVRNKKITTYCYSEEEKQKAILELKGGCEVTRFKGLGEISPNEFKGFIDINSIKLTKVDLFNIKEIKEKLGFYMGQNTPERRNFIMENLI.

ATP is bound by residues Tyr6, Asn51, Asp77, 110–116 (GLNGVGT), and Lys311. The 111-residue stretch at 397–507 (TMIFLTEGDS…NGHMYILETP (111 aa)) folds into the Toprim domain. Mg(2+) contacts are provided by Glu403, Asp472, and Asp474.

Belongs to the type II topoisomerase family. Heterotetramer composed of ParC and ParE. Requires Mg(2+) as cofactor. The cofactor is Mn(2+). It depends on Ca(2+) as a cofactor.

It carries out the reaction ATP-dependent breakage, passage and rejoining of double-stranded DNA.. In terms of biological role, topoisomerase IV is essential for chromosome segregation. It relaxes supercoiled DNA. Performs the decatenation events required during the replication of a circular DNA molecule. This is DNA topoisomerase 4 subunit B (parE) from Borreliella burgdorferi (strain ATCC 35210 / DSM 4680 / CIP 102532 / B31) (Borrelia burgdorferi).